A 114-amino-acid polypeptide reads, in one-letter code: Large ribosomal subunit protein uL18 (114 aa).

The protein belongs to the universal ribosomal protein uL18 family. In terms of assembly, part of the 50S ribosomal subunit; part of the 5S rRNA/L5/L18/L25 subcomplex. Contacts the 23S rRNA. Contacts protein L27 and the 5S rRNA.

In terms of biological role, this is one of the proteins that bind and probably mediate the attachment of the 5S RNA into the large ribosomal subunit, where it forms part of the central protuberance. This Deinococcus radiodurans (strain ATCC 13939 / DSM 20539 / JCM 16871 / CCUG 27074 / LMG 4051 / NBRC 15346 / NCIMB 9279 / VKM B-1422 / R1) protein is Large ribosomal subunit protein uL18 (rplR).